The following is a 330-amino-acid chain: 2-methoxy-6-polyprenyl-1,4-benzoquinol methylase, mitochondrial (330 aa).

The N-terminal 42 residues, 1 to 42 (MAAPRSWALWSFCGCGWSRAVSGCRLPGLRSSSPRGPLGARL), are a transit peptide targeting the mitochondrion. Residues Thr117, Asp171, and 199–200 (DA) each bind S-adenosyl-L-methionine.

The protein belongs to the class I-like SAM-binding methyltransferase superfamily. MenG/UbiE family. As to quaternary structure, component of a multi-subunit COQ enzyme complex, composed of at least COQ3, COQ4, COQ5, COQ6, COQ7 and COQ9. Interacts with PYURF; the interaction is direct, stabilizes COQ5 protein and associates PYURF with COQ enzyme complex.

The protein localises to the mitochondrion inner membrane. It carries out the reaction 2-methoxy-6-(all-trans-decaprenyl)benzene-1,4-diol + S-adenosyl-L-methionine = 5-methoxy-2-methyl-3-(all-trans-decaprenyl)benzene-1,4-diol + S-adenosyl-L-homocysteine + H(+). Its pathway is cofactor biosynthesis; ubiquinone biosynthesis. Methyltransferase required for the conversion of 2-decaprenyl-6-methoxy-1,4-benzoquinol (DDMQH2) to 2-decaprenyl-3-methyl-6-methoxy-1,4-benzoquinol (DMQH2). This is 2-methoxy-6-polyprenyl-1,4-benzoquinol methylase, mitochondrial from Bos taurus (Bovine).